A 104-amino-acid chain; its full sequence is Flagellar hook-basal body complex protein FliE (104 aa).

It belongs to the FliE family.

The protein resides in the bacterial flagellum basal body. The protein is Flagellar hook-basal body complex protein FliE of Escherichia coli (strain 55989 / EAEC).